The sequence spans 52 residues: MFDINLTHEQQQKAVEQIQELMAKGISSGEAIQIVAKALREIHKNDKKTPDN.

Belongs to the UPF0181 family.

The protein is UPF0181 protein NTHI1697 of Haemophilus influenzae (strain 86-028NP).